The primary structure comprises 209 residues: Uridine kinase (209 aa).

Gly-12–Thr-19 is an ATP binding site.

Belongs to the uridine kinase family.

The protein resides in the cytoplasm. It carries out the reaction uridine + ATP = UMP + ADP + H(+). The enzyme catalyses cytidine + ATP = CMP + ADP + H(+). The protein operates within pyrimidine metabolism; CTP biosynthesis via salvage pathway; CTP from cytidine: step 1/3. It functions in the pathway pyrimidine metabolism; UMP biosynthesis via salvage pathway; UMP from uridine: step 1/1. The sequence is that of Uridine kinase from Streptococcus agalactiae serotype III (strain NEM316).